The following is a 135-amino-acid chain: MTMFRSISMVMLLVALVTFISMVSSAASSPEADFVKKTISSHKIVIFSKSYCPYCKKAKSVFRELDQVPYVVELDEREDGWSIQTALGEIVGRRTVPQVFINGKHLGGSDDTVDAYESGELAKLLGVSGNKEAEL.

One can recognise a Glutaredoxin domain in the interval 32–132 (ADFVKKTISS…KLLGVSGNKE (101 aa)). The cysteines at positions 52 and 55 are disulfide-linked.

It belongs to the glutaredoxin family. CPYC subfamily.

Its subcellular location is the cytoplasm. Has a glutathione-disulfide oxidoreductase activity in the presence of NADPH and glutathione reductase. Reduces low molecular weight disulfides and proteins. The polypeptide is Glutaredoxin-C4 (GRXC4) (Arabidopsis thaliana (Mouse-ear cress)).